The chain runs to 986 residues: MTTTTTTRLLLAAILLAVAAADDDGQTLLEIKKSFRNVDNVLYDWAGDGAPRRYCSWRGVLCDNVTFAVAALNLSGLNLGGEISPAIGNLKSVESIDLKSNELSGQIPDEIGDCTSLKTLDLSSNNLGGDIPFSISKLKHLENLILKNNQLVGMIPSTLSQLPNLKILDLAQNKLNGEIPRLIYWNEVLQYLGLRSNNLEGSLSPEMCQLTGLWYFDVKNNSLTGIIPDTIGNCTSFQVLDLSYNRLTGEIPFNIGFLQVATLSLQGNNFSGPIPSVIGLMQALAVLDLSFNQLSGPIPSILGNLTYTEKLYLQGNRLTGSIPPELGNMSTLHYLELNDNQLTGFIPPELGKLTGLFDLNLANNNLEGPIPDNISSCMNLISFNAYGNKLNGTVPRSLHKLESITYLNLSSNYLSGAIPIELAKMKNLDTLDLSCNMVAGPIPSAIGSLEHLLRLNFSNNNLVGYIPAEFGNLRSIMEIDLSSNHLGGLIPQEVGMLQNLILLKLESNNITGDVSSLINCFSLNVLNVSYNNLAGIVPTDNNFSRFSPDSFLGNPGLCGYWLGSSCYSTSHVQRSSVSRSAILGIAVAGLVILLMILAAACWPHWAQVPKDVSLCKPDIHALPSSNVPPKLVILHMNMAFLVYEDIMRMTENLSEKYIIGYGASSTVYKCVLKNCKPVAIKKLYAHYPQSLKEFETELETVGSIKHRNLVSLQGYSLSPAGNLLFYDYLENGSLWDVLHAGSSKKQKLDWEARLRIALGAAQGLAYLHHDCNPRIIHRDVKSKNILLDKDYEAHLADFGIAKSLCTSKTHTSTYVMGTIGYIDPEYACTSRLNEKSDVYSYGIVLLELLTGKKPVDNECNLHHLILSKAADNTVMEMVDPDIADTCKDLGEVKKVFQLALLCSKRQPSDRPTMHEVVRVLDCLVYPDPPSKPALPPALPQSSTVPSYVNEYVSLRGGSTLSCENSSSASDAELFLKFGEVISQNTE.

The first 21 residues, 1–21 (MTTTTTTRLLLAAILLAVAAA), serve as a signal peptide directing secretion. Residues 22-581 (DDDGQTLLEI…VQRSSVSRSA (560 aa)) lie on the Extracellular side of the membrane. N-linked (GlcNAc...) asparagine glycosylation is found at asparagine 64 and asparagine 73. LRR repeat units lie at residues 68–89 (AVAA…AIGN), 90–114 (LKSV…IGDC), 116–138 (SLKT…ISKL), 139–161 (KHLE…TLSQ), 162–186 (LPNL…IYWN), 188–210 (VLQY…MCQL), 211–233 (TGLW…TIGN), 234–259 (CTSF…GFLQ), 261–280 (ATLS…VIGL), 281–304 (MQAL…ILGN), 306–329 (TYTE…LGNM), 330–352 (STLH…ELGK), 354–377 (TGLF…ISSC), 379–401 (NLIS…LHKL), 402–425 (ESIT…LAKM), 427–449 (NLDT…IGSL), 450–472 (EHLL…EFGN), 473–498 (LRSI…GMLQ), 500–520 (LILL…LINC), and 521–545 (FSLN…NFSR). N-linked (GlcNAc...) asparagine glycosylation is found at asparagine 220 and asparagine 233. Residues asparagine 269, asparagine 304, and asparagine 328 are each glycosylated (N-linked (GlcNAc...) asparagine). N-linked (GlcNAc...) asparagine glycosylation is found at asparagine 373, asparagine 391, and asparagine 408. The N-linked (GlcNAc...) asparagine glycan is linked to asparagine 456. Asparagine 509, asparagine 527, and asparagine 542 each carry an N-linked (GlcNAc...) asparagine glycan. A helical transmembrane segment spans residues 582-602 (ILGIAVAGLVILLMILAAACW). The Cytoplasmic segment spans residues 603–986 (PHWAQVPKDV…FGEVISQNTE (384 aa)). The region spanning 653 to 934 (LSEKYIIGYG…YPDPPSKPAL (282 aa)) is the Protein kinase domain. Residues 659–667 (IGYGASSTV) and lysine 681 contribute to the ATP site. Aspartate 779 (proton acceptor) is an active-site residue.

It belongs to the protein kinase superfamily. Ser/Thr protein kinase family.

The protein resides in the cell membrane. It catalyses the reaction L-seryl-[protein] + ATP = O-phospho-L-seryl-[protein] + ADP + H(+). The enzyme catalyses L-threonyl-[protein] + ATP = O-phospho-L-threonyl-[protein] + ADP + H(+). Its function is as follows. Receptor kinase that may be involved in the regulation of cell proliferation and cell growth. This is LRR receptor-like serine/threonine-protein kinase ER2 from Oryza sativa subsp. japonica (Rice).